Consider the following 156-residue polypeptide: Ribosome maturation factor RimP (156 aa).

It belongs to the RimP family.

It localises to the cytoplasm. Its function is as follows. Required for maturation of 30S ribosomal subunits. This is Ribosome maturation factor RimP from Synechococcus sp. (strain JA-2-3B'a(2-13)) (Cyanobacteria bacterium Yellowstone B-Prime).